The primary structure comprises 507 residues: MVTIRADEISNIIRERIEQYNREVKIVNTGTVLQVGDGIARIHGLDEVMAGELVEFEEGTIGIALNLESNNVGVVLMGDGLMIQEGSSVKATGRIAQIPVSEAYLGRVINALAKPIDGRGEISASESRLIESPAPGIISRRSVYEPLQTGLIAIDSMIPIGRGQRELIIGDRQTGKTAVATDTILNQQGQNVICVYVAIGQKASSVAQVVTTFQERGAMEYTIVVAETADSPATLQYLAPYTGAALAEYFMYRKRHTLIIYDDPSKQAQAYRQMSLLLRRPPGREAYPGDVFYLHSRLLERAAKSSSSLGEGSMTALPIVETQSGDVSAYIPTNVISITDGQIFLSADLFNAGIRPAINVGISVSRVGSAAQIKAMKQVAGKSKLELAQFAELEAFAQFSSDLDKATQNQLARGQRLRELLKQSQAAPLTVEEQIMTIYTGTNGYLDSLEIGQVRKFLAELRNYLKTNKPQFQEIISSTKTFTEEAETLLKETIQEQMERFLLQEQA.

ATP is bound at residue glycine 170–threonine 177.

Belongs to the ATPase alpha/beta chains family. F-type ATPases have 2 components, CF(1) - the catalytic core - and CF(0) - the membrane proton channel. CF(1) has five subunits: alpha(3), beta(3), gamma(1), delta(1), epsilon(1). CF(0) has four main subunits: a, b, b' and c.

It is found in the plastid. The protein localises to the chloroplast thylakoid membrane. The catalysed reaction is ATP + H2O + 4 H(+)(in) = ADP + phosphate + 5 H(+)(out). In terms of biological role, produces ATP from ADP in the presence of a proton gradient across the membrane. The alpha chain is a regulatory subunit. The protein is ATP synthase subunit alpha, chloroplastic of Vitis vinifera (Grape).